The following is a 342-amino-acid chain: Protein FinQ (342 aa).

Positions 208–227 form a DNA-binding region, H-T-H motif; sequence RDREFNLLNAQISMVLYICS.

In terms of biological role, transcriptional inhibitor of the F plasmid transfer genes. FinQ may regulate a gene or genes encoded on the IncI plasmids, and coincidentally may inhibit F transfer when coresident. This is Protein FinQ (finQ) from Escherichia coli.